Reading from the N-terminus, the 654-residue chain is DNA ligase (654 aa).

Residues 31-35, 80-81, and Glu109 contribute to the NAD(+) site; these read DSEYD and SL. The active-site N6-AMP-lysine intermediate is Lys111. Positions 132, 166, 280, and 304 each coordinate NAD(+). Cys398, Cys401, Cys416, and Cys421 together coordinate Zn(2+). The region spanning 579 to 654 is the BRCT domain; it reads NIEGILSGKT…IWSEQDLLDL (76 aa).

This sequence belongs to the NAD-dependent DNA ligase family. LigA subfamily. It depends on Mg(2+) as a cofactor. The cofactor is Mn(2+).

The catalysed reaction is NAD(+) + (deoxyribonucleotide)n-3'-hydroxyl + 5'-phospho-(deoxyribonucleotide)m = (deoxyribonucleotide)n+m + AMP + beta-nicotinamide D-nucleotide.. In terms of biological role, DNA ligase that catalyzes the formation of phosphodiester linkages between 5'-phosphoryl and 3'-hydroxyl groups in double-stranded DNA using NAD as a coenzyme and as the energy source for the reaction. It is essential for DNA replication and repair of damaged DNA. The chain is DNA ligase from Lactococcus lactis subsp. lactis (strain IL1403) (Streptococcus lactis).